The primary structure comprises 166 residues: Protein-export protein SecB (166 aa).

The protein belongs to the SecB family. In terms of assembly, homotetramer, a dimer of dimers. One homotetramer interacts with 1 SecA dimer.

It localises to the cytoplasm. One of the proteins required for the normal export of preproteins out of the cell cytoplasm. It is a molecular chaperone that binds to a subset of precursor proteins, maintaining them in a translocation-competent state. It also specifically binds to its receptor SecA. This Cereibacter sphaeroides (strain ATCC 17025 / ATH 2.4.3) (Rhodobacter sphaeroides) protein is Protein-export protein SecB.